A 152-amino-acid chain; its full sequence is Large ribosomal subunit protein bL9 (152 aa).

The protein belongs to the bacterial ribosomal protein bL9 family.

Functionally, binds to the 23S rRNA. This is Large ribosomal subunit protein bL9 from Coxiella burnetii (strain RSA 331 / Henzerling II).